Consider the following 245-residue polypeptide: Aliphatic sulfonates import ATP-binding protein SsuB 1 (245 aa).

Residues 8-223 (VSITGLRKSF…ERADPDILRY (216 aa)) form the ABC transporter domain. Position 40–47 (40–47 (GPSGTGKT)) interacts with ATP.

Belongs to the ABC transporter superfamily. Aliphatic sulfonates importer (TC 3.A.1.17.2) family. In terms of assembly, the complex is composed of two ATP-binding proteins (SsuB), two transmembrane proteins (SsuC) and a solute-binding protein (SsuA).

The protein resides in the cell membrane. It carries out the reaction ATP + H2O + aliphatic sulfonate-[sulfonate-binding protein]Side 1 = ADP + phosphate + aliphatic sulfonateSide 2 + [sulfonate-binding protein]Side 1.. Its function is as follows. Part of the ABC transporter complex SsuABC involved in aliphatic sulfonates import. Responsible for energy coupling to the transport system. This is Aliphatic sulfonates import ATP-binding protein SsuB 1 from Nocardia farcinica (strain IFM 10152).